Reading from the N-terminus, the 441-residue chain is Ribulose bisphosphate carboxylase large chain (441 aa).

Lysine 4 is subject to N6,N6,N6-trimethyllysine. Asparagine 113 and threonine 163 together coordinate substrate. Catalysis depends on lysine 165, which acts as the Proton acceptor. Lysine 167 serves as a coordination point for substrate. Mg(2+) contacts are provided by lysine 191, aspartate 193, and glutamate 194. Lysine 191 is subject to N6-carboxylysine. Histidine 284 acts as the Proton acceptor in catalysis. 3 residues coordinate substrate: arginine 285, histidine 317, and serine 369.

This sequence belongs to the RuBisCO large chain family. Type I subfamily. In terms of assembly, heterohexadecamer of 8 large chains and 8 small chains; disulfide-linked. The disulfide link is formed within the large subunit homodimers. Mg(2+) is required as a cofactor. Post-translationally, the disulfide bond which can form in the large chain dimeric partners within the hexadecamer appears to be associated with oxidative stress and protein turnover.

It localises to the plastid. It is found in the chloroplast. The catalysed reaction is 2 (2R)-3-phosphoglycerate + 2 H(+) = D-ribulose 1,5-bisphosphate + CO2 + H2O. It catalyses the reaction D-ribulose 1,5-bisphosphate + O2 = 2-phosphoglycolate + (2R)-3-phosphoglycerate + 2 H(+). RuBisCO catalyzes two reactions: the carboxylation of D-ribulose 1,5-bisphosphate, the primary event in carbon dioxide fixation, as well as the oxidative fragmentation of the pentose substrate in the photorespiration process. Both reactions occur simultaneously and in competition at the same active site. The chain is Ribulose bisphosphate carboxylase large chain from Darlingtonia californica (California pitcher plant).